The primary structure comprises 221 residues: MHLSSDEVILWQSGFLKLNLTIVTTWALMLLLAGGSALITRRLSTGITISRWQSMLEIIVTMAHRQISEVGLQKPEKYLPFIAALFLFIATANLCTVIPGYEPPTGSLSTTAALALSVFIAVPLFGIAESSLVGYLKTYAEPTPIMLPFNIVGELTRTMALAVRLFGNMMSGDMILVILLTISPLVFPVLMNILGLLTGMVQAYIFSILATVYIAAATRTR.

5 consecutive transmembrane segments (helical) span residues L20 to T40, Y78 to I98, L108 to A128, M174 to L194, and L196 to A216.

This sequence belongs to the ATPase A chain family. F-type ATPases have 2 components, CF(1) - the catalytic core - and CF(0) - the membrane proton channel. CF(1) has five subunits: alpha(3), beta(3), gamma(1), delta(1), epsilon(1). CF(0) has four main subunits: a, b, b' and c.

The protein localises to the cell inner membrane. Functionally, key component of the proton channel; it plays a direct role in the translocation of protons across the membrane. The polypeptide is ATP synthase subunit a 1 (Chlorobaculum tepidum (strain ATCC 49652 / DSM 12025 / NBRC 103806 / TLS) (Chlorobium tepidum)).